The chain runs to 347 residues: Ribosomal RNA large subunit methyltransferase M (347 aa).

Residues serine 184, 217–220 (APGG), aspartate 236, aspartate 256, and aspartate 272 each bind S-adenosyl-L-methionine. The Proton acceptor role is filled by lysine 301.

It belongs to the class I-like SAM-binding methyltransferase superfamily. RNA methyltransferase RlmE family. RlmM subfamily. As to quaternary structure, monomer.

Its subcellular location is the cytoplasm. The catalysed reaction is cytidine(2498) in 23S rRNA + S-adenosyl-L-methionine = 2'-O-methylcytidine(2498) in 23S rRNA + S-adenosyl-L-homocysteine + H(+). Catalyzes the 2'-O-methylation at nucleotide C2498 in 23S rRNA. In Xanthomonas axonopodis pv. citri (strain 306), this protein is Ribosomal RNA large subunit methyltransferase M.